We begin with the raw amino-acid sequence, 150 residues long: Small ribosomal subunit protein uS15 (150 aa).

The segment covering 1-10 (MPHRSRHKRG) has biased composition (basic residues). The interval 1–21 (MPHRSRHKRGSSGSVRPATKT) is disordered.

This sequence belongs to the universal ribosomal protein uS15 family. In terms of assembly, part of the 30S ribosomal subunit.

The sequence is that of Small ribosomal subunit protein uS15 from Caldivirga maquilingensis (strain ATCC 700844 / DSM 13496 / JCM 10307 / IC-167).